The following is a 349-amino-acid chain: S-adenosylmethionine:tRNA ribosyltransferase-isomerase (349 aa).

The protein belongs to the QueA family. Monomer.

The protein localises to the cytoplasm. The catalysed reaction is 7-aminomethyl-7-carbaguanosine(34) in tRNA + S-adenosyl-L-methionine = epoxyqueuosine(34) in tRNA + adenine + L-methionine + 2 H(+). It functions in the pathway tRNA modification; tRNA-queuosine biosynthesis. Its function is as follows. Transfers and isomerizes the ribose moiety from AdoMet to the 7-aminomethyl group of 7-deazaguanine (preQ1-tRNA) to give epoxyqueuosine (oQ-tRNA). The protein is S-adenosylmethionine:tRNA ribosyltransferase-isomerase of Flavobacterium psychrophilum (strain ATCC 49511 / DSM 21280 / CIP 103535 / JIP02/86).